The chain runs to 525 residues: Glutamate--cysteine ligase (525 aa).

Belongs to the glutamate--cysteine ligase type 1 family. Type 1 subfamily.

The enzyme catalyses L-cysteine + L-glutamate + ATP = gamma-L-glutamyl-L-cysteine + ADP + phosphate + H(+). The protein operates within sulfur metabolism; glutathione biosynthesis; glutathione from L-cysteine and L-glutamate: step 1/2. The protein is Glutamate--cysteine ligase of Vibrio vulnificus (strain YJ016).